Here is a 374-residue protein sequence, read N- to C-terminus: Protein dip1 (374 aa).

The protein belongs to the LDB17 family.

It localises to the cytoplasm. The protein localises to the nucleus. It is found in the cell tip. In terms of biological role, may be involved in protein-linked oligosaccharide phosphorylation. In Schizosaccharomyces pombe (strain 972 / ATCC 24843) (Fission yeast), this protein is Protein dip1 (dip1).